Here is a 280-residue protein sequence, read N- to C-terminus: Probable endonuclease 4 (280 aa).

H69, H109, E145, D179, H182, H216, D229, H231, and E261 together coordinate Zn(2+).

This sequence belongs to the AP endonuclease 2 family. Zn(2+) is required as a cofactor.

The catalysed reaction is Endonucleolytic cleavage to 5'-phosphooligonucleotide end-products.. In terms of biological role, endonuclease IV plays a role in DNA repair. It cleaves phosphodiester bonds at apurinic or apyrimidinic (AP) sites, generating a 3'-hydroxyl group and a 5'-terminal sugar phosphate. This Pelodictyon phaeoclathratiforme (strain DSM 5477 / BU-1) protein is Probable endonuclease 4.